The following is a 301-amino-acid chain: Galectin-6 (301 aa).

Galectin domains lie at 19 to 149 (YKRP…INFF) and 173 to 301 (YVGA…YVHI).

This is Galectin-6 (Lgals6) from Mus musculus (Mouse).